Here is a 116-residue protein sequence, read N- to C-terminus: Large ribosomal subunit protein bL17 (116 aa).

The protein belongs to the bacterial ribosomal protein bL17 family. As to quaternary structure, part of the 50S ribosomal subunit. Contacts protein L32.

The sequence is that of Large ribosomal subunit protein bL17 from Synechococcus sp. (strain CC9311).